A 166-amino-acid chain; its full sequence is UPF0304 protein VP0990 (166 aa).

It belongs to the UPF0304 family.

This Vibrio parahaemolyticus serotype O3:K6 (strain RIMD 2210633) protein is UPF0304 protein VP0990.